The primary structure comprises 80 residues: Toxin Acra I-2 (80 aa).

The signal sequence occupies residues 1 to 22 (MMKLALFSIIVILFSLIGSIHG). Residues 25 to 80 (VPGNYPLDSSGNKYPCTVLGDNQSCIDVCKKHGVKYGYCYSFKCWCEFLEDKNVSI) enclose the LCN-type CS-alpha/beta domain. Disulfide bonds link cysteine 40/cysteine 63, cysteine 49/cysteine 68, and cysteine 53/cysteine 70.

In terms of tissue distribution, expressed by the venom gland.

It is found in the secreted. Probable neurotoxin that inhibits ion channels. Is toxic to mice. Is about 2.8% of the total protein in the venom. In Androctonus crassicauda (Arabian fat-tailed scorpion), this protein is Toxin Acra I-2.